The following is a 73-amino-acid chain: Translation initiation factor IF-1 (73 aa).

One can recognise an S1-like domain in the interval 1 to 73 (MAKKEGALEL…TRGRIVYRHK (73 aa)).

It belongs to the IF-1 family. Component of the 30S ribosomal translation pre-initiation complex which assembles on the 30S ribosome in the order IF-2 and IF-3, IF-1 and N-formylmethionyl-tRNA(fMet); mRNA recruitment can occur at any time during PIC assembly.

It is found in the cytoplasm. Its function is as follows. One of the essential components for the initiation of protein synthesis. Stabilizes the binding of IF-2 and IF-3 on the 30S subunit to which N-formylmethionyl-tRNA(fMet) subsequently binds. Helps modulate mRNA selection, yielding the 30S pre-initiation complex (PIC). Upon addition of the 50S ribosomal subunit IF-1, IF-2 and IF-3 are released leaving the mature 70S translation initiation complex. The polypeptide is Translation initiation factor IF-1 (Cutibacterium acnes (strain DSM 16379 / KPA171202) (Propionibacterium acnes)).